Here is a 472-residue protein sequence, read N- to C-terminus: MLKIYNTLTRQKEEFHPQQAGIVNMYVCGPTVYNYIHIGNARSVVAFDTVRRYLEFSGYQVNYVSNFTDVDDKMIKAAKEQGITVPELAYKYIQAYMEDTAALNVEPATTHPRATENIDGIISFIEDLIEKGYAYQSGGDVYYRARKFAHYGQLSGQSLDDLEVGASEHVSTEEVAKKKDPLDFALWKAAKPGEIKWDSPWGAGRPGWHIECSVMSTKYLGDTLDIHAGGQDLEFPHHENEIAQSEAKTGHRFVNYWMHNGFVTIGRDNEKMSKSLGNFVTVHDLIKEVDPQVLRFFMSTTQYRRPIQYSQESLVEAQANLEHLKNTYDNLAYRLKDATSGTDGGVQRQLADFRARFVAAMDDDINVQNGIAVVYELMRFANQYVEQRLVQREPIVAIQLMLKRLVAVFGVDLAVSATEINDEKIKELIEKRNAARAEKDFALSDQIRDQLRDQGIILEDTPQGTRYRKESN.

Cysteine 28 contributes to the Zn(2+) binding site. Residues 30–40 (PTVYNYIHIGN) carry the 'HIGH' region motif. Zn(2+) contacts are provided by cysteine 212, histidine 237, and glutamate 241. The 'KMSKS' region signature appears at 271-275 (KMSKS). An ATP-binding site is contributed by lysine 274.

Belongs to the class-I aminoacyl-tRNA synthetase family. Monomer. Requires Zn(2+) as cofactor.

It is found in the cytoplasm. It catalyses the reaction tRNA(Cys) + L-cysteine + ATP = L-cysteinyl-tRNA(Cys) + AMP + diphosphate. This chain is Cysteine--tRNA ligase, found in Limosilactobacillus fermentum (strain NBRC 3956 / LMG 18251) (Lactobacillus fermentum).